A 132-amino-acid chain; its full sequence is Fatty acid-binding protein, adipocyte (132 aa).

Cysteine 2 bears the N-acetylcysteine mark. Serine 13 carries the post-translational modification Phosphoserine. Tyrosine 20 carries the post-translational modification Phosphotyrosine; by Tyr-kinases. The Nuclear localization signal motif lies at 22–32; that stretch reads KEVGVGFATRK. Residue 127 to 129 participates in a fatty acid binding; that stretch reads RVY.

The protein belongs to the calycin superfamily. Fatty-acid binding protein (FABP) family. As to quaternary structure, monomer. Homodimer. Interacts with PPARG.

The protein resides in the cytoplasm. Its subcellular location is the nucleus. Functionally, lipid transport protein in adipocytes. Binds both long chain fatty acids and retinoic acid. Delivers long-chain fatty acids and retinoic acid to their cognate receptors in the nucleus. The sequence is that of Fatty acid-binding protein, adipocyte (Fabp4) from Mus musculus (Mouse).